Here is a 68-residue protein sequence, read N- to C-terminus: uncharacterized protein (68 aa).

This sequence to B.subtilis XtrA.

This is an uncharacterized protein from Bacillus subtilis (strain 168).